Consider the following 353-residue polypeptide: DNA polymerase IV (353 aa).

Positions 6 to 187 (IIHIDCDCFY…LPVTKLHGVG (182 aa)) constitute a UmuC domain. The Mg(2+) site is built by Asp10 and Asp105. Residue Glu106 is part of the active site.

Belongs to the DNA polymerase type-Y family. In terms of assembly, monomer. The cofactor is Mg(2+).

Its subcellular location is the cytoplasm. It catalyses the reaction DNA(n) + a 2'-deoxyribonucleoside 5'-triphosphate = DNA(n+1) + diphosphate. Poorly processive, error-prone DNA polymerase involved in untargeted mutagenesis. Copies undamaged DNA at stalled replication forks, which arise in vivo from mismatched or misaligned primer ends. These misaligned primers can be extended by PolIV. Exhibits no 3'-5' exonuclease (proofreading) activity. May be involved in translesional synthesis, in conjunction with the beta clamp from PolIII. This Pseudomonas savastanoi pv. phaseolicola (strain 1448A / Race 6) (Pseudomonas syringae pv. phaseolicola (strain 1448A / Race 6)) protein is DNA polymerase IV.